The primary structure comprises 57 residues: Large ribosomal subunit protein bL33 (57 aa).

The protein belongs to the bacterial ribosomal protein bL33 family.

This Bifidobacterium longum (strain NCC 2705) protein is Large ribosomal subunit protein bL33.